The sequence spans 69 residues: Light-harvesting protein B-870 beta chain (69 aa).

A propeptide spanning residues 1–2 is cleaved from the precursor; sequence MA. The Cytoplasmic segment spans residues 3–22; it reads EVKQESLSGITEGEAKEFHK. Positions 21 and 39 each coordinate a bacteriochlorophyll. A helical transmembrane segment spans residues 23–45; it reads IFTSSILVFFGVAAFAHLLVWIW. The Periplasmic portion of the chain corresponds to 46–56; the sequence is RPWVPGPNGYS. The propeptide occupies 57-69; sequence ALETLTQTLTYLS.

Belongs to the antenna complex beta subunit family. In terms of assembly, the core complex is formed by different alpha and beta chains, binding bacteriochlorophyll molecules, and arranged most probably in tetrameric structures disposed around the reaction center. The non-pigmented gamma chains may constitute additional components.

The protein resides in the cell inner membrane. Its function is as follows. Antenna complexes are light-harvesting systems, which transfer the excitation energy to the reaction centers. In Rhodospirillum rubrum (strain ATCC 11170 / ATH 1.1.1 / DSM 467 / LMG 4362 / NCIMB 8255 / S1), this protein is Light-harvesting protein B-870 beta chain.